The primary structure comprises 632 residues: Arginine--tRNA ligase (632 aa).

A 'HIGH' region motif is present at residues 129–139 (ANPVHPLHVGS).

This sequence belongs to the class-I aminoacyl-tRNA synthetase family.

It is found in the cytoplasm. It catalyses the reaction tRNA(Arg) + L-arginine + ATP = L-arginyl-tRNA(Arg) + AMP + diphosphate. The polypeptide is Arginine--tRNA ligase (Korarchaeum cryptofilum (strain OPF8)).